The following is an 867-amino-acid chain: Alanine--tRNA ligase (867 aa).

Histidine 556, histidine 560, cysteine 658, and histidine 662 together coordinate Zn(2+).

This sequence belongs to the class-II aminoacyl-tRNA synthetase family. The cofactor is Zn(2+).

It is found in the cytoplasm. The enzyme catalyses tRNA(Ala) + L-alanine + ATP = L-alanyl-tRNA(Ala) + AMP + diphosphate. Functionally, catalyzes the attachment of alanine to tRNA(Ala) in a two-step reaction: alanine is first activated by ATP to form Ala-AMP and then transferred to the acceptor end of tRNA(Ala). Also edits incorrectly charged Ser-tRNA(Ala) and Gly-tRNA(Ala) via its editing domain. This Fusobacterium nucleatum subsp. nucleatum (strain ATCC 25586 / DSM 15643 / BCRC 10681 / CIP 101130 / JCM 8532 / KCTC 2640 / LMG 13131 / VPI 4355) protein is Alanine--tRNA ligase.